We begin with the raw amino-acid sequence, 124 residues long: Thioredoxin domain-containing protein C21C3.12c (124 aa).

The 88-residue stretch at 37–124 folds into the Thioredoxin domain; it reads PWCPTVRAAL…ANKFSKFIDI (88 aa). Cysteine 39 serves as the catalytic Nucleophile.

The protein belongs to the thioredoxin family.

The protein resides in the cytoplasm. It is found in the nucleus. This is Thioredoxin domain-containing protein C21C3.12c from Schizosaccharomyces pombe (strain 972 / ATCC 24843) (Fission yeast).